A 351-amino-acid chain; its full sequence is Fe(3+) ions import ATP-binding protein FbpC (351 aa).

Residues 7 to 237 (VVLKNVCKRF…PSSMFMANFM (231 aa)) form the ABC transporter domain. An ATP-binding site is contributed by 39-46 (GPSGCGKT).

This sequence belongs to the ABC transporter superfamily. Fe(3+) ion importer (TC 3.A.1.10) family. As to quaternary structure, the complex is composed of two ATP-binding proteins (FbpC), two transmembrane proteins (FbpB) and a solute-binding protein (FbpA).

It is found in the cell inner membrane. The enzyme catalyses Fe(3+)(out) + ATP + H2O = Fe(3+)(in) + ADP + phosphate + H(+). Functionally, part of the ABC transporter complex FbpABC involved in Fe(3+) ions import. Responsible for energy coupling to the transport system. The protein is Fe(3+) ions import ATP-binding protein FbpC of Photobacterium profundum (strain SS9).